A 444-amino-acid chain; its full sequence is Maintenance of mitochondrial morphology protein 1 (444 aa).

The Lumenal segment spans residues 1 to 110; that stretch reads MNNLDNLAGN…SFSGWSFIEG (110 aa). Residues 111-131 form a helical membrane-spanning segment; the sequence is FIIGQFSVIIVLIFFIKFFVF. Topologically, residues 132-444 are cytoplasmic; it reads SDGSSSNSSN…TDDVPLSKAE (313 aa). In terms of domain architecture, SMP-LTD spans 207–419; it reads PSESLDWFNV…EPRFQCIRLP (213 aa).

The protein belongs to the MMM1 family. In terms of assembly, homodimer. Component of the ER-mitochondria encounter structure (ERMES) or MDM complex, composed of MMM1, MDM10, MDM12 and MDM34. An MMM1 homodimer associates with one molecule of MDM12 on each side in a pairwise head-to-tail manner, and the SMP-LTD domains of MMM1 and MDM12 generate a continuous hydrophobic tunnel for phospholipid trafficking.

The protein resides in the endoplasmic reticulum membrane. In terms of biological role, component of the ERMES/MDM complex, which serves as a molecular tether to connect the endoplasmic reticulum (ER) and mitochondria. Components of this complex are involved in the control of mitochondrial shape and protein biogenesis, and function in nonvesicular lipid trafficking between the ER and mitochondria. The MDM12-MMM1 subcomplex functions in the major beta-barrel assembly pathway that is responsible for biogenesis of all outer membrane beta-barrel proteins, and acts in a late step after the SAM complex. The MDM10-MDM12-MMM1 subcomplex further acts in the TOM40-specific pathway after the action of the MDM12-MMM1 complex. Essential for establishing and maintaining the structure of mitochondria and maintenance of mtDNA nucleoids. The chain is Maintenance of mitochondrial morphology protein 1 from Vanderwaltozyma polyspora (strain ATCC 22028 / DSM 70294 / BCRC 21397 / CBS 2163 / NBRC 10782 / NRRL Y-8283 / UCD 57-17) (Kluyveromyces polysporus).